The primary structure comprises 532 residues: Zinc finger protein ZIC 2 (532 aa).

The segment at 100–255 (PHAAHVGSYS…YMRQQCIKQE (156 aa)) is necessary for interaction with MDFIC and transcriptional activation or repression. 2 positions are modified to phosphoserine: Ser-191 and Ser-199. A Glycyl lysine isopeptide (Lys-Gly) (interchain with G-Cter in SUMO2) cross-link involves residue Lys-253. Residues 256 to 291 (LICKWIDPEQLSNPKKSCNKTFSTMHELVTHVSVEH) form a C2H2-type 1; atypical zinc finger. The C2H2-type 2; atypical zinc finger occupies 300 to 327 (HVCFWEECPREGKPFKAKYKLVNHIRVH). 3 C2H2-type zinc fingers span residues 333 to 357 (FPCP…KRTH), 363 to 387 (FQCE…MHVH), and 393 to 415 (YLCK…MKVH). 2 disordered regions span residues 406 to 452 (SSLR…SSSN) and 475 to 532 (HRGG…EWYV). The segment covering 417–435 (SSPQGSESSPAASSGYESS) has biased composition (low complexity). A compositionally biased stretch (gly residues) spans 476-521 (RGGGSGSGGAGGGSGGGSGSGGGGGGAGGGGGGSSGGGSGTAGGHS). Polar residues predominate over residues 523-532 (LSSNFNEWYV).

Belongs to the GLI C2H2-type zinc-finger protein family. In terms of assembly, interacts with RNF180. Interacts (via the C2H2-type domains 3, 4 and 5) with MDFIC (via the C2H2-type domains 3, 4 and 5); the interaction reduces its transcriptional activity. Interacts with GLI1 and GLI2. Interacts (via C2H2-type domain 3) with DHX9. Phosphorylated. Post-translationally, ubiquitinated by RNF180, leading to its degradation.

The protein localises to the nucleus. Its subcellular location is the cytoplasm. Acts as a transcriptional activator or repressor. Plays important roles in the early stage of organogenesis of the CNS. Activates the transcription of the serotonin transporter SERT in uncrossed ipsilateral retinal ganglion cells (iRGCs) to refine eye-specific projections in primary visual targets. Its transcriptional activity is repressed by MDFIC. Involved in the formation of the ipsilateral retinal projection at the optic chiasm midline. Drives the expression of EPHB1 on ipsilaterally projecting growth cones. Binds to the minimal GLI-consensus sequence 5'-TGGGTGGTC-3'. Associates to the basal SERT promoter region from ventrotemporal retinal segments of retinal embryos. This Homo sapiens (Human) protein is Zinc finger protein ZIC 2 (ZIC2).